The sequence spans 1023 residues: 2-oxoglutarate dehydrogenase complex component E1 (1023 aa).

Residues 1–40 (MFHLRTCAAKLRPLTASQTVKTFSQNKPAAIRTFQQIRCY) constitute a mitochondrion transit peptide. Lys-74 carries the post-translational modification N6-succinyllysine. Ser-100 is subject to Phosphoserine. Positions 143, 156, and 158 each coordinate Ca(2+). A thiamine diphosphate-binding site is contributed by Arg-312. Lys-401 is modified (N6-acetyllysine). 3 residues coordinate thiamine diphosphate: Asp-411, Asn-444, and Ile-446. The Mg(2+) site is built by Asp-411, Asn-444, and Ile-446. Lys-534 participates in a covalent cross-link: Glycyl lysine isopeptide (Lys-Gly) (interchain with G-Cter in ubiquitin). Lys-564 carries the post-translational modification N6-succinyllysine. Residue Gln-676 coordinates thiamine diphosphate. A recognized by alloreactive CD8 cytotoxic T-lymphocytes in association with a class I MHC protein region spans residues 933–939 (LSPFPFD). At Lys-970 the chain carries N6-acetyllysine.

This sequence belongs to the alpha-ketoglutarate dehydrogenase family. Homodimer. The 2-oxoglutarate dehydrogenase complex is composed of OGDH (2-oxoglutarate dehydrogenase; E1), DLST (dihydrolipoamide succinyltransferase; E2), DLD (dihydrolipoamide dehydrogenase; E3) and the assembly factor KGD4. It contains multiple copies of the three enzymatic components (E1, E2 and E3). In the nucleus, the 2-oxoglutarate dehydrogenase complex associates with KAT2A. Interacts with ABHD11; this interaction maintains the functional lipoylation of the 2-oxoglutarate dehydrogenase complex. Thiamine diphosphate is required as a cofactor. Mg(2+) serves as cofactor.

It is found in the mitochondrion. It localises to the nucleus. It carries out the reaction N(6)-[(R)-lipoyl]-L-lysyl-[protein] + 2-oxoglutarate + H(+) = N(6)-[(R)-S(8)-succinyldihydrolipoyl]-L-lysyl-[protein] + CO2. Its activity is regulated as follows. Calcium ions and ADP stimulate, whereas ATP and NADH reduce catalytic activity. Its function is as follows. 2-oxoglutarate dehydrogenase (E1o) component of the 2-oxoglutarate dehydrogenase complex (OGDHC). Participates in the first step, rate limiting for the overall conversion of 2-oxoglutarate to succinyl-CoA and CO(2) catalyzed by the whole OGDHC. Catalyzes the irreversible decarboxylation of 2-oxoglutarate (alpha-ketoglutarate) via the thiamine diphosphate (ThDP) cofactor and subsequent transfer of the decarboxylated acyl intermediate on an oxidized dihydrolipoyl group that is covalently amidated to the E2 enzyme (dihydrolipoyllysine-residue succinyltransferase or DLST). Plays a key role in the Krebs (citric acid) cycle, which is a common pathway for oxidation of fuel molecules, including carbohydrates, fatty acids, and amino acids. Can catalyze the decarboxylation of 2-oxoadipate in vitro, but at a much lower rate than 2-oxoglutarate. Mainly active in the mitochondrion. A fraction of the 2-oxoglutarate dehydrogenase complex also localizes in the nucleus and is required for lysine succinylation of histones: associates with KAT2A on chromatin and provides succinyl-CoA to histone succinyltransferase KAT2A. The chain is 2-oxoglutarate dehydrogenase complex component E1 from Mus musculus (Mouse).